The following is a 473-amino-acid chain: UDP-N-acetylmuramate--L-alanine ligase (473 aa).

Residue 123-129 (GSHGKTS) participates in ATP binding.

It belongs to the MurCDEF family.

The protein resides in the cytoplasm. The enzyme catalyses UDP-N-acetyl-alpha-D-muramate + L-alanine + ATP = UDP-N-acetyl-alpha-D-muramoyl-L-alanine + ADP + phosphate + H(+). It functions in the pathway cell wall biogenesis; peptidoglycan biosynthesis. Cell wall formation. The protein is UDP-N-acetylmuramate--L-alanine ligase of Prochlorococcus marinus subsp. pastoris (strain CCMP1986 / NIES-2087 / MED4).